We begin with the raw amino-acid sequence, 398 residues long: 1-deoxy-D-xylulose 5-phosphate reductoisomerase (398 aa).

T10, G11, S12, V13, G36, K37, N38, and N124 together coordinate NADPH. K125 is a 1-deoxy-D-xylulose 5-phosphate binding site. NADPH is bound at residue E126. D150 is a binding site for Mn(2+). Residues S151, E152, S186, and H209 each contribute to the 1-deoxy-D-xylulose 5-phosphate site. E152 is a binding site for Mn(2+). Position 215 (G215) interacts with NADPH. 1-deoxy-D-xylulose 5-phosphate is bound by residues S222, N227, K228, and E231. Residue E231 participates in Mn(2+) binding.

This sequence belongs to the DXR family. In terms of assembly, homodimer. Mg(2+) serves as cofactor. Mn(2+) is required as a cofactor.

It carries out the reaction 2-C-methyl-D-erythritol 4-phosphate + NADP(+) = 1-deoxy-D-xylulose 5-phosphate + NADPH + H(+). Its pathway is isoprenoid biosynthesis; isopentenyl diphosphate biosynthesis via DXP pathway; isopentenyl diphosphate from 1-deoxy-D-xylulose 5-phosphate: step 1/6. In terms of biological role, catalyzes the NADPH-dependent rearrangement and reduction of 1-deoxy-D-xylulose-5-phosphate (DXP) to 2-C-methyl-D-erythritol 4-phosphate (MEP). This Photorhabdus laumondii subsp. laumondii (strain DSM 15139 / CIP 105565 / TT01) (Photorhabdus luminescens subsp. laumondii) protein is 1-deoxy-D-xylulose 5-phosphate reductoisomerase.